The chain runs to 1067 residues: Ubiquitin carboxyl-terminal hydrolase 26 (1067 aa).

Residues 1 to 12 are compositionally biased toward basic residues; the sequence is MSRPNTRNKNKR. Residues 1-22 are disordered; sequence MSRPNTRNKNKRQRPDAVDSSS. In terms of domain architecture, USP spans 106 to 442; that stretch reads AGLTNLGATC…DAYMLMYSLR (337 aa). The active-site Nucleophile is cysteine 115. Histidine 359 (proton acceptor) is an active-site residue. A disordered region spans residues 385–418; sequence KRPCNEASSSTPQSESNGTASSGNITDGIQSGSS. The span at 390–418 shows a compositional bias: polar residues; the sequence is EASSSTPQSESNGTASSGNITDGIQSGSS. 3 consecutive DUSP domains span residues 503–595, 610–711, and 738–861; these read NALT…GDYC, DSYR…DCTC, and TLKV…SAFI. The Ubiquitin-like domain occupies 948–1031; it reads FEVDRRTSKR…LWVRDTEMHE (84 aa).

It belongs to the peptidase C19 family. Expressed in seedlings, roots, stems, leaves and inflorescences.

It is found in the nucleus. It catalyses the reaction Thiol-dependent hydrolysis of ester, thioester, amide, peptide and isopeptide bonds formed by the C-terminal Gly of ubiquitin (a 76-residue protein attached to proteins as an intracellular targeting signal).. Recognizes and hydrolyzes the peptide bond at the C-terminal Gly of ubiquitin. Involved in the processing of poly-ubiquitin precursors as well as that of ubiquitinated proteins. Deubiquitinates H2BK143ub1 of histone H2B. The chain is Ubiquitin carboxyl-terminal hydrolase 26 (UBP26) from Arabidopsis thaliana (Mouse-ear cress).